Here is a 600-residue protein sequence, read N- to C-terminus: UvrABC system protein C (600 aa).

One can recognise a GIY-YIG domain in the interval 15–92 (EKPGCYLMKD…IKKYQPYYNV (78 aa)). Residues 197–232 (TSVKQDLTTKMEKASENLEFERAAEIRDQLKYIEET) enclose the UVR domain.

The protein belongs to the UvrC family. As to quaternary structure, interacts with UvrB in an incision complex.

It localises to the cytoplasm. The UvrABC repair system catalyzes the recognition and processing of DNA lesions. UvrC both incises the 5' and 3' sides of the lesion. The N-terminal half is responsible for the 3' incision and the C-terminal half is responsible for the 5' incision. This is UvrABC system protein C from Lactobacillus acidophilus (strain ATCC 700396 / NCK56 / N2 / NCFM).